Here is a 295-residue protein sequence, read N- to C-terminus: Pyridoxal 5'-phosphate synthase subunit PdxS (295 aa).

Residue Asp-25 coordinates D-ribose 5-phosphate. Lys-82 (schiff-base intermediate with D-ribose 5-phosphate) is an active-site residue. D-ribose 5-phosphate is bound at residue Gly-154. Position 166 (Arg-166) interacts with D-glyceraldehyde 3-phosphate. D-ribose 5-phosphate is bound by residues Gly-215 and Gly-236–Ser-237.

It belongs to the PdxS/SNZ family. In terms of assembly, in the presence of PdxT, forms a dodecamer of heterodimers.

The enzyme catalyses aldehydo-D-ribose 5-phosphate + D-glyceraldehyde 3-phosphate + L-glutamine = pyridoxal 5'-phosphate + L-glutamate + phosphate + 3 H2O + H(+). The protein operates within cofactor biosynthesis; pyridoxal 5'-phosphate biosynthesis. Its function is as follows. Catalyzes the formation of pyridoxal 5'-phosphate from ribose 5-phosphate (RBP), glyceraldehyde 3-phosphate (G3P) and ammonia. The ammonia is provided by the PdxT subunit. Can also use ribulose 5-phosphate and dihydroxyacetone phosphate as substrates, resulting from enzyme-catalyzed isomerization of RBP and G3P, respectively. The sequence is that of Pyridoxal 5'-phosphate synthase subunit PdxS from Listeria innocua serovar 6a (strain ATCC BAA-680 / CLIP 11262).